A 598-amino-acid chain; its full sequence is Rho-related protein racA (598 aa).

11 to 17 (DGAVGKS) contacts GTP. The Effector region signature appears at 32–40 (YVPTVFDNY). GTP is bound by residues 57–61 (DTAGQ) and 115–118 (TKND). A disordered region spans residues 175–210 (ASAKKKGGFFSSSSSSSSSSSSKSSEKSVPIPPVMP). Residues 182–197 (GFFSSSSSSSSSSSSK) show a composition bias toward low complexity. BTB domains follow at residues 239–344 (SDVK…NYLD) and 405–472 (SDIQ…PIEE).

The protein in the N-terminal section; belongs to the small GTPase superfamily. Rho family. As to quaternary structure, interacts with pakB.

The protein is Rho-related protein racA (racA) of Dictyostelium discoideum (Social amoeba).